A 131-amino-acid polypeptide reads, in one-letter code: Ribonuclease VapC3 (131 aa).

Residues 4 to 121 (VVDASAIAAL…GKLLTLDRQL (118 aa)) form the PINc domain. Residues Asp-6, Asp-100, and Asp-118 each coordinate Mg(2+).

The protein belongs to the PINc/VapC protein family. As to quaternary structure, homodimer. Forms a complex with putative antitoxin VapB3, possibly VapB(2)-VapC(2). Requires Mg(2+) as cofactor.

Its activity is regulated as follows. Inhibited by EDTA. Its function is as follows. Toxic component of a type II toxin-antitoxin (TA) system. Has ribonuclease activity. The chain is Ribonuclease VapC3 from Pyrobaculum aerophilum (strain ATCC 51768 / DSM 7523 / JCM 9630 / CIP 104966 / NBRC 100827 / IM2).